The following is a 175-amino-acid chain: B9 domain-containing protein 2 (175 aa).

Positions 2–118 constitute a C2 B9-type domain; sequence AELHIIGQII…QCVTWRPLGS (117 aa).

The protein belongs to the B9D family. As to quaternary structure, part of the tectonic-like complex (also named B9 complex).

Its subcellular location is the cytoplasm. It localises to the cytoskeleton. The protein resides in the cilium basal body. It is found in the cilium axoneme. Its function is as follows. Component of the tectonic-like complex, a complex localized at the transition zone of primary cilia and acting as a barrier that prevents diffusion of transmembrane proteins between the cilia and plasma membranes. This is B9 domain-containing protein 2 (b9d2) from Danio rerio (Zebrafish).